The following is a 396-amino-acid chain: Decapping and exoribonuclease protein (396 aa).

Positions 1 to 20 (MDPRGTKRGAEKTEVAEPRN) are enriched in basic and acidic residues. Residues 1–37 (MDPRGTKRGAEKTEVAEPRNKLPRPAPSLPTDPALYS) form a disordered region. Substrate is bound by residues R58, E101, and 131 to 133 (WRG). Mg(2+) is bound at residue E192. Substrate contacts are provided by C217 and E234. E234, D236, E253, and L254 together coordinate Mg(2+). Substrate is bound by residues K255 and Q280. At T392 the chain carries Phosphothreonine. S394 carries the phosphoserine modification.

The protein belongs to the DXO/Dom3Z family. It depends on Mg(2+) as a cofactor. Ubiquitously expressed.

It is found in the nucleus. It carries out the reaction a 5'-end triphospho-ribonucleoside in mRNA + H2O = a 5'-end phospho-ribonucleoside in mRNA + diphosphate + H(+). The enzyme catalyses a 5'-end NAD(+)-phospho-ribonucleoside in mRNA + H2O = a 5'-end phospho-ribonucleoside in mRNA + NAD(+) + H(+). It catalyses the reaction a 5'-end NAD(+)-phospho-ribonucleoside in snoRNA + H2O = a 5'-end phospho-ribonucleoside in snoRNA + NAD(+) + H(+). The catalysed reaction is a 5'-end (N(7)-methyl 5'-triphosphoguanosine)-ribonucleoside-ribonucleotide in mRNA + H2O = a (N(7)-methyl 5'-triphosphoguanosine)-nucleoside + a 5'-end phospho-ribonucleoside in mRNA + H(+). It carries out the reaction a 5'-end FAD-phospho-ribonucleoside in mRNA + H2O = a 5'-end phospho-ribonucleoside in mRNA + FAD + H(+). The enzyme catalyses a 5'-end CoA-ribonucleoside in mRNA + H2O = 3'-dephospho-CoA + a 5'-end phospho-ribonucleoside in mRNA + H(+). Functionally, decapping enzyme for NAD-capped RNAs: specifically hydrolyzes the nicotinamide adenine dinucleotide (NAD) cap from a subset of RNAs by removing the entire NAD moiety from the 5'-end of an NAD-capped RNA. The NAD-cap is present at the 5'-end of some RNAs and snoRNAs. In contrast to the canonical 5'-end N7 methylguanosine (m7G) cap, the NAD cap promotes mRNA decay. Preferentially acts on NAD-capped transcripts in response to environmental stress. Also acts as a non-canonical decapping enzyme that removes the entire cap structure of m7G capped or incompletely capped RNAs and mediates their subsequent degradation. Specifically degrades pre-mRNAs with a defective 5'-end m7G cap and is part of a pre-mRNA capping quality control. Has decapping activity toward incomplete 5'-end m7G cap mRNAs such as unmethylated 5'-end-capped RNA (cap0), while it has no activity toward 2'-O-ribose methylated m7G cap (cap1). In contrast to canonical decapping enzymes DCP2 and NUDT16, which cleave the cap within the triphosphate linkage, the decapping activity releases the entire cap structure GpppN and a 5'-end monophosphate RNA. Also has 5'-3' exoribonuclease activities: The 5'-end monophosphate RNA is then degraded by the 5'-3' exoribonuclease activity, enabling this enzyme to decap and degrade incompletely capped mRNAs. Also possesses RNA 5'-pyrophosphohydrolase activity by hydrolyzing the 5'-end triphosphate to release pyrophosphates. Exhibits decapping activity towards FAD-capped RNAs. Exhibits decapping activity towards dpCoA-capped RNAs in vitro. This Homo sapiens (Human) protein is Decapping and exoribonuclease protein.